Reading from the N-terminus, the 723-residue chain is Catalase-peroxidase (723 aa).

Positions 98-226 (WHSAGSYRVG…LAAVMMGLIY (129 aa)) form a cross-link, tryptophyl-tyrosyl-methioninium (Trp-Tyr) (with M-252). Catalysis depends on histidine 99, which acts as the Proton acceptor. The segment at residues 226 to 252 (YVNPEGVDGNPDPLKTAKDMRVTFARM) is a cross-link (tryptophyl-tyrosyl-methioninium (Tyr-Met) (with W-98)). Histidine 267 is a heme b binding site.

It belongs to the peroxidase family. Peroxidase/catalase subfamily. As to quaternary structure, homodimer or homotetramer. Heme b is required as a cofactor. Formation of the three residue Trp-Tyr-Met cross-link is important for the catalase, but not the peroxidase activity of the enzyme.

The catalysed reaction is H2O2 + AH2 = A + 2 H2O. It catalyses the reaction 2 H2O2 = O2 + 2 H2O. Its function is as follows. Bifunctional enzyme with both catalase and broad-spectrum peroxidase activity. In Vibrio vulnificus (strain YJ016), this protein is Catalase-peroxidase.